Here is a 210-residue protein sequence, read N- to C-terminus: NAD(P)H-quinone oxidoreductase subunit I (210 aa).

2 consecutive 4Fe-4S ferredoxin-type domains span residues 55–84 and 95–124; these read GRIHYEFDKCIACEVCVRVCPINLPVVDWV and RNYSIDFGVCIFCGNCVEYCPTNCLSMTEE. [4Fe-4S] cluster is bound by residues Cys-64, Cys-67, Cys-70, Cys-74, Cys-104, Cys-107, Cys-110, and Cys-114.

This sequence belongs to the complex I 23 kDa subunit family. In terms of assembly, NDH-1 is composed of at least 11 different subunits. [4Fe-4S] cluster is required as a cofactor.

Its subcellular location is the cellular thylakoid membrane. It carries out the reaction a plastoquinone + NADH + (n+1) H(+)(in) = a plastoquinol + NAD(+) + n H(+)(out). The enzyme catalyses a plastoquinone + NADPH + (n+1) H(+)(in) = a plastoquinol + NADP(+) + n H(+)(out). Functionally, NDH-1 shuttles electrons from an unknown electron donor, via FMN and iron-sulfur (Fe-S) centers, to quinones in the respiratory and/or the photosynthetic chain. The immediate electron acceptor for the enzyme in this species is believed to be plastoquinone. Couples the redox reaction to proton translocation, and thus conserves the redox energy in a proton gradient. The polypeptide is NAD(P)H-quinone oxidoreductase subunit I (Synechococcus sp. (strain CC9902)).